A 442-amino-acid chain; its full sequence is RNA-binding protein 34 (442 aa).

Disordered regions lie at residues 1-26 (MALG…GVSC) and 60-157 (TAEP…VADG). The segment covering 112–122 (KLSDADKRLAN) has biased composition (basic and acidic residues). At Lys-153 the chain carries N6-acetyllysine. 2 RRM domains span residues 189–284 (RTVF…LASE) and 291–368 (RSVF…RSVN). Lys-246 is covalently cross-linked (Glycyl lysine isopeptide (Lys-Gly) (interchain with G-Cter in SUMO2)). Residue Ser-292 is modified to Phosphoserine. Residues 418–442 (KAVLMKKKKKGQKKKVQMKKPRKQQ) are disordered. Basic residues predominate over residues 421–442 (LMKKKKKGQKKKVQMKKPRKQQ).

It belongs to the RRM RBM34 family.

The protein localises to the nucleus. The protein resides in the nucleolus. In Mus musculus (Mouse), this protein is RNA-binding protein 34 (Rbm34).